Here is a 245-residue protein sequence, read N- to C-terminus: NAD(P)H-quinone oxidoreductase subunit K (245 aa).

Residues cysteine 58, cysteine 59, cysteine 123, and cysteine 154 each coordinate [4Fe-4S] cluster.

The protein belongs to the complex I 20 kDa subunit family. As to quaternary structure, NDH-1 can be composed of about 15 different subunits; different subcomplexes with different compositions have been identified which probably have different functions. [4Fe-4S] cluster serves as cofactor.

The protein resides in the cellular thylakoid membrane. It carries out the reaction a plastoquinone + NADH + (n+1) H(+)(in) = a plastoquinol + NAD(+) + n H(+)(out). The enzyme catalyses a plastoquinone + NADPH + (n+1) H(+)(in) = a plastoquinol + NADP(+) + n H(+)(out). NDH-1 shuttles electrons from an unknown electron donor, via FMN and iron-sulfur (Fe-S) centers, to quinones in the respiratory and/or the photosynthetic chain. The immediate electron acceptor for the enzyme in this species is believed to be plastoquinone. Couples the redox reaction to proton translocation, and thus conserves the redox energy in a proton gradient. Cyanobacterial NDH-1 also plays a role in inorganic carbon-concentration. In Nostoc sp. (strain PCC 7120 / SAG 25.82 / UTEX 2576), this protein is NAD(P)H-quinone oxidoreductase subunit K.